Here is a 401-residue protein sequence, read N- to C-terminus: L-rhamnonate dehydratase (401 aa).

Residues H29 and R55 each coordinate substrate. Residues D222, E248, and E276 each coordinate Mg(2+). Catalysis depends on H325, which acts as the Proton acceptor. E345 contacts substrate.

The protein belongs to the mandelate racemase/muconate lactonizing enzyme family. RhamD subfamily. Homooctamer; tetramer of dimers. It depends on Mg(2+) as a cofactor.

The catalysed reaction is L-rhamnonate = 2-dehydro-3-deoxy-L-rhamnonate + H2O. Functionally, catalyzes the dehydration of L-rhamnonate to 2-keto-3-deoxy-L-rhamnonate (KDR). This is L-rhamnonate dehydratase from Escherichia coli O157:H7.